Here is a 623-residue protein sequence, read N- to C-terminus: Immunity-related GTPase family Q protein (623 aa).

The cysteines at positions 152 and 158 are disulfide-linked. Residues 155–180 (SDGCEELERLRAALQSQAEALRRLLP) adopt a coiled-coil conformation. The LIR 1 motif lies at 186 to 189 (FEVL). Thr-203 carries the phosphothreonine modification. The 227-residue stretch at 223 to 449 (ARLDLAVAGK…PGLCEWLRRA (227 aa)) folds into the IRG-type G domain. Residues 334–393 (EGEDPECLGEGKMENPKGESLKNAGGGGLENALSKGREKCSAGSQKAGSGEGPGKAGSEG) are disordered. The segment covering 342–353 (GEGKMENPKGES) has biased composition (basic and acidic residues). Positions 421–424 (WEVL) match the LIR 2 motif.

The protein belongs to the TRAFAC class dynamin-like GTPase superfamily. IRG family. Interacts (via LIR motif 1) with GABARAPL2. Interacts (via LIR motif 2) with MAP1LC3B/LC3B.

It is found in the lysosome. The protein localises to the cytoplasmic vesicle. It localises to the autophagosome. Functionally, autophagy receptor that specifically promotes clearance of misfolded MHC class I molecules by targeting them to the lysosome for degradation. Acts as a molecular adapter that specifically recognizes and binds (1) misfolded MHC class I molecules following their ubiquitination, as well as (2) autophagy-related proteins, promoting the recruitment of misfolded MHC class I molecules to autophagy machinery for degradation. Degradation of misfolded MHC class I molecules is essential to prevent accumulation of defective MHC class I complexes at the surface of CD8(+) T-cells and prevent a stronger T-cell-mediated response. In contrast to other members of the family, does not show GTPase activity. The protein is Immunity-related GTPase family Q protein of Homo sapiens (Human).